The chain runs to 431 residues: Serine/threonine-protein kinase Sgk1 (431 aa).

The interval 1-60 (MTVKTEAARDTLTYSRMRGMVAILIAFMKQRRMGLNDFIQKIANNSYACKHPEVQSILKI) is necessary for localization to the mitochondria. Positions 64 to 92 (QEPELMNANPSPPPSPSQQINLGPSSNPH) are disordered. Position 74 is a phosphoserine (Ser-74). A Phosphoserine; by MAPK7 modification is found at Ser-78. Positions 81–91 (QQINLGPSSNP) are enriched in polar residues. Residues 98–355 (FHFLKVIGKG…FMEIKNHVFF (258 aa)) enclose the Protein kinase domain. ATP contacts are provided by residues 104 to 112 (IGKGSFGKV) and Lys-127. The Nuclear localization signal signature appears at 131–141 (KKAILKKKEEK). Residue Asp-222 is the Proton acceptor of the active site. Position 256 is a phosphothreonine; by PDPK1 (Thr-256). Residues 356–431 (SLINWEDLIN…SYAPPMDSFL (76 aa)) form the AGC-kinase C-terminal domain. Phosphothreonine; by PKA is present on Thr-369. 3 positions are modified to phosphoserine: Ser-397, Ser-401, and Ser-422.

Belongs to the protein kinase superfamily. AGC Ser/Thr protein kinase family. As to quaternary structure, homodimer; disulfide-linked. Forms a trimeric complex with FBXW7 and NOTCH1. Interacts with MAPK3/ERK1, MAPK1/ERK2, MAP2K1/MEK1, MAP2K2/MEK2, NEDD4, NEDD4L, MAPT/TAU, MAPK7, CREB1, SLC9A3R2/NHERF2 and KCNJ1/ROMK1. Associates with the mammalian target of rapamycin complex 2 (mTORC2) via an interaction with MAPKAP1/SIN1. In terms of processing, regulated by phosphorylation. Activated by phosphorylation on Ser-422 by mTORC2, transforming it into a substrate for PDPK1 which phosphorylates it on Thr-256. Phosphorylation on Ser-397 and Ser-401 are also essential for its activity. Phosphorylation on Ser-78 by MAPK7 is required for growth factor-induced cell cycle progression. Post-translationally, ubiquitinated by NEDD4L; which promotes proteasomal degradation. Ubiquitinated by SYVN1 at the endoplasmic reticulum; which promotes rapid proteasomal degradation and maintains a high turnover rate in resting cells.

The protein localises to the cytoplasm. It is found in the nucleus. It localises to the endoplasmic reticulum membrane. The protein resides in the cell membrane. Its subcellular location is the mitochondrion. The enzyme catalyses L-seryl-[protein] + ATP = O-phospho-L-seryl-[protein] + ADP + H(+). It carries out the reaction L-threonyl-[protein] + ATP = O-phospho-L-threonyl-[protein] + ADP + H(+). Its activity is regulated as follows. Two specific sites, one in the kinase domain (Thr-256) and the other in the C-terminal regulatory region (Ser-422), need to be phosphorylated for its full activation. Phosphorylation at Ser-397 and Ser-401 are also essential for its activity. Activated by WNK1, WNK2, WNK3 and WNK4; which promote phosphorylation by mTORC2. Functionally, serine/threonine-protein kinase which is involved in the regulation of a wide variety of ion channels, membrane transporters, cellular enzymes, transcription factors, neuronal excitability, cell growth, proliferation, survival, migration and apoptosis. Plays an important role in cellular stress response. Contributes to regulation of renal Na(+) retention, renal K(+) elimination, salt appetite, gastric acid secretion, intestinal Na(+)/H(+) exchange and nutrient transport, insulin-dependent salt sensitivity of blood pressure, salt sensitivity of peripheral glucose uptake, cardiac repolarization and memory consolidation. Up-regulates Na(+) channels: SCNN1A/ENAC, SCN5A and ASIC1/ACCN2, K(+) channels: KCNJ1/ROMK1, KCNA1-5, KCNQ1-5 and KCNE1, epithelial Ca(2+) channels: TRPV5 and TRPV6, chloride channels: BSND, CLCN2 and CFTR, glutamate transporters: SLC1A3/EAAT1, SLC1A2 /EAAT2, SLC1A1/EAAT3, SLC1A6/EAAT4 and SLC1A7/EAAT5, amino acid transporters: SLC1A5/ASCT2, SLC38A1/SN1 and SLC6A19, creatine transporter: SLC6A8, Na(+)/dicarboxylate cotransporter: SLC13A2/NADC1, Na(+)-dependent phosphate cotransporter: SLC34A2/NAPI-2B, glutamate receptor: GRIK2/GLUR6. Up-regulates carriers: SLC9A3/NHE3, SLC12A1/NKCC2, SLC12A3/NCC, SLC5A3/SMIT, SLC2A1/GLUT1, SLC5A1/SGLT1 and SLC15A2/PEPT2. Regulates enzymes: GSK3A/B, PMM2 and Na(+)/K(+) ATPase, and transcription factors: CTNNB1 and nuclear factor NF-kappa-B. Stimulates sodium transport into epithelial cells by enhancing the stability and expression of SCNN1A/ENAC. This is achieved by phosphorylating the NEDD4L ubiquitin E3 ligase, promoting its interaction with 14-3-3 proteins, thereby preventing it from binding to SCNN1A/ENAC and targeting it for degradation. Regulates store-operated Ca(+2) entry (SOCE) by stimulating ORAI1 and STIM1. Regulates KCNJ1/ROMK1 directly via its phosphorylation or indirectly via increased interaction with SLC9A3R2/NHERF2. Phosphorylates MDM2 and activates MDM2-dependent ubiquitination of p53/TP53. Phosphorylates MAPT/TAU and mediates microtubule depolymerization and neurite formation in hippocampal neurons. Phosphorylates SLC2A4/GLUT4 and up-regulates its activity. Phosphorylates APBB1/FE65 and promotes its localization to the nucleus. Phosphorylates MAPK1/ERK2 and activates it by enhancing its interaction with MAP2K1/MEK1 and MAP2K2/MEK2. Phosphorylates FBXW7 and plays an inhibitory role in the NOTCH1 signaling. Phosphorylates FOXO1 resulting in its relocalization from the nucleus to the cytoplasm. Phosphorylates FOXO3, promoting its exit from the nucleus and interference with FOXO3-dependent transcription. Phosphorylates BRAF and MAP3K3/MEKK3 and inhibits their activity. Phosphorylates SLC9A3/NHE3 in response to dexamethasone, resulting in its activation and increased localization at the cell membrane. Phosphorylates CREB1. Necessary for vascular remodeling during angiogenesis. The polypeptide is Serine/threonine-protein kinase Sgk1 (SGK1) (Bos taurus (Bovine)).